A 173-amino-acid polypeptide reads, in one-letter code: MKVAVFPGSFDPLTLGHLDLIKRGSALFDQLAVAVMTNESKNPLFTVEERVAQIKEAVSGLDNVSVITTEGLTVDLMNRIGADYLMRGLRNTTDFQYERDIAAMNNFLDDQCETVFFLAKPEYQHLSSSLLKEVTSAGGDISAYLPANINEALKKRLMEREMLRVKKDNEKAR.

S9 provides a ligand contact to substrate. ATP-binding positions include 9-10 and H17; that span reads SF. Substrate-binding residues include K41, T73, and R87. ATP-binding positions include 88–90, E98, and 123–129; these read GLR and YQHLSSS.

This sequence belongs to the bacterial CoaD family. In terms of assembly, homohexamer. The cofactor is Mg(2+).

The protein resides in the cytoplasm. The enzyme catalyses (R)-4'-phosphopantetheine + ATP + H(+) = 3'-dephospho-CoA + diphosphate. The protein operates within cofactor biosynthesis; coenzyme A biosynthesis; CoA from (R)-pantothenate: step 4/5. Reversibly transfers an adenylyl group from ATP to 4'-phosphopantetheine, yielding dephospho-CoA (dPCoA) and pyrophosphate. The sequence is that of Phosphopantetheine adenylyltransferase from Limosilactobacillus reuteri (strain DSM 20016) (Lactobacillus reuteri).